Consider the following 198-residue polypeptide: HTH-type transcriptional regulator BetI (198 aa).

An HTH tetR-type domain is found at 8–68 (PLRRRELIDA…ATMRHLLREL (61 aa)). Residues 31 to 50 (TVAQIAHEAGVSPALAHHYF) constitute a DNA-binding region (H-T-H motif).

The protein operates within amine and polyamine biosynthesis; betaine biosynthesis via choline pathway [regulation]. Its function is as follows. Repressor involved in the biosynthesis of the osmoprotectant glycine betaine. It represses transcription of the choline transporter BetT and the genes of BetAB involved in the synthesis of glycine betaine. In Brucella abortus (strain 2308), this protein is HTH-type transcriptional regulator BetI.